The primary structure comprises 3418 residues: MPIGSKERPTFFEIFKTRCNKADLGPISLNWFEELSSEAPPYNSEPAEESEHKNNNYEPNLFKTPQRKPSYNQLASTPIIFKEQGLTLPLYQSPVKELDKFKLDLGRNVPNSRHKSLRTVKTKMDQADDVSCPLLNSCLSESPVVLQCTHVTPQRDKSVVCGSLFHTPKFVKGRQTPKHISESLGAEVDPDMSWSSSLATPPTLSSTVLIVRNEEASETVFPHDTTANVKSYFSNHDESLKKNDRFIASVTDSENTNQREAASHGFGKTSGNSFKVNSCKDHIGKSMPNVLEDEVYETVVDTSEEDSFSLCFSKCRTKNLQKVRTSKTRKKIFHEANADECEKSKNQVKEKYSFVSEVEPNDTDPLDSNVANQKPFESGSDKISKEVVPSLACEWSQLTLSGLNGAQMEKIPLLHISSCDQNISEKDLLDTENKRKKDFLTSENSLPRISSLPKSEKPLNEETVVNKRDEEQHLESHTDCILAVKQAISGTSPVASSFQGIKKSIFRIRESPKETFNASFSGHMTDPNFKKETEASESGLEIHTVCSQKEDSLCPNLIDNGSWPATTTQNSVALKNAGLISTLKKKTNKFIYAIHDETSYKGKKIPKDQKSELINCSAQFEANAFEAPLTFANADSGLLHSSVKRSCSQNDSEEPTLSLTSSFGTILRKCSRNETCSNNTVISQDLDYKEAKCNKEKLQLFITPEADSLSCLQEGQCENDPKSKKVSDIKEEVLAAACHPVQHSKVEYSDTDFQSQKSLLYDHENASTLILTPTSKDVLSNLVMISRGKESYKMSDKLKGNNYESDVELTKNIPMEKNQDVCALNENYKNVELLPPEKYMRVASPSRKVQFNQNTNLRVIQKNQEETTSISKITVNPDSEELFSDNENNFVFQVANERNNLALGNTKELHETDLTCVNEPIFKNSTMVLYGDTGDKQATQVSIKKDLVYVLAEENKNSVKQHIKMTLGQDLKSDISLNIDKIPEKNNDYMNKWAGLLGPISNHSFGGSFRTASNKEIKLSEHNIKKSKMFFKDIEEQYPTSLACVEIVNTLALDNQKKLSKPQSINTVSAHLQSSVVVSDCKNSHITPQMLFSKQDFNSNHNLTPSQKAEITELSTILEESGSQFEFTQFRKPSYILQKSTFEVPENQMTILKTTSEECRDADLHVIMNAPSIGQVDSSKQFEGTVEIKRKFAGLLKNDCNKSASGYLTDENEVGFRGFYSAHGTKLNVSTEALQKAVKLFSDIENISEETSAEVHPISLSSSKCHDSVVSMFKIENHNDKTVSEKNNKCQLILQNNIEMTTGTFVEEITENYKRNTENEDNKYTAASRNSHNLEFDGSDSSKNDTVCIHKDETDLLFTDQHNICLKLSGQFMKEGNTQIKEDLSDLTFLEVAKAQEACHGNTSNKEQLTATKTEQNIKDFETSDTFFQTASGKNISVAKESFNKIVNFFDQKPEELHNFSLNSELHSDIRKNKMDILSYEETDIVKHKILKESVPVGTGNQLVTFQGQPERDEKIKEPTLLGFHTASGKKVKIAKESLDKVKNLFDEKEQGTSEITSFSHQWAKTLKYREACKDLELACETIEITAAPKCKEMQNSLNNDKNLVSIETVVPPKLLSDNLCRQTENLKTSKSIFLKVKVHENVEKETAKSPATCYTNQSPYSVIENSALAFYTSCSRKTSVSQTSLLEAKKWLREGIFDGQPERINTADYVGNYLYENNSNSTIAENDKNHLSEKQDTYLSNSSMSNSYSYHSDEVYNDSGYLSKNKLDSGIEPVLKNVEDQKNTSFSKVISNVKDANAYPQTVNEDICVEELVTSSSPCKNKNAAIKLSISNSNNFEVGPPAFRIASGKIVCVSHETIKKVKDIFTDSFSKVIKENNENKSKICQTKIMAGCYEALDDSEDILHNSLDNDECSTHSHKVFADIQSEEILQHNQNMSGLEKVSKISPCDVSLETSDICKCSIGKLHKSVSSANTCGIFSTASGKSVQVSDASLQNARQVFSEIEDSTKQVFSKVLFKSNEHSDQLTREENTAIRTPEHLISQKGFSYNVVNSSAFSGFSTASGKQVSILESSLHKVKGVLEEFDLIRTEHSLHYSPTSRQNVSKILPRVDKRNPEHCVNSEMEKTCSKEFKLSNNLNVEGGSSENNHSIKVSPYLSQFQQDKQQLVLGTKVSLVENIHVLGKEQASPKNVKMEIGKTETFSDVPVKTNIEVCSTYSKDSENYFETEAVEIAKAFMEDDELTDSKLPSHATHSLFTCPENEEMVLSNSRIGKRRGEPLILVGEPSIKRNLLNEFDRIIENQEKSLKASKSTPDGTIKDRRLFMHHVSLEPITCVPFRTTKERQEIQNPNFTAPGQEFLSKSHLYEHLTLEKSSSNLAVSGHPFYQVSATRNEKMRHLITTGRPTKVFVPPFKTKSHFHRVEQCVRNINLEENRQKQNIDGHGSDDSKNKINDNEIHQFNKNNSNQAVAVTFTKCEEEPLDLITSLQNARDIQDMRIKKKQRQRVFPQPGSLYLAKTSTLPRISLKAAVGGQVPSACSHKQLYTYGVSKHCIKINSKNAESFQFHTEDYFGKESLWTGKGIQLADGGWLIPSNDGKAGKEEFYRALCDTPGVDPKLISRIWVYNHYRWIIWKLAAMECAFPKEFANRCLSPERVLLQLKYRYDTEIDRSRRSAIKKIMERDDTAAKTLVLCVSDIISLSANISETSSNKTSSADTQKVAIIELTDGWYAVKAQLDPPLLAVLKNGRLTVGQKIILHGAELVGSPDACTPLEAPESLMLKISANSTRPARWYTKLGFFPDPRPFPLPLSSLFSDGGNVGCVDVIIQRAYPIQWMEKTSSGLYIFRNEREEEKEAAKYVEAQQKRLEALFTKIQEEFEEHEENTTKPYLPSRALTRQQVRALQDGAELYEAVKNAADPAYLEGYFSEEQLRALNNHRQMLNDKKQAQIQLEIRKAMESAEQKEQGLSRDVTTVWKLRIVSYSKKEKDSVILSIWRPSSDLYSLLTEGKRYRIYHLATSKSKSKSERANIQLAATKKTQYQQLPVSDEILFQIYQPREPLHFSKFLDPDFQPSCSEVDLIGFVVSVVKKTGLAPFVYLSDECYNLLAIKFWIDLNEDIIKPHMLIAASNLQWRPESKSGLLTLFAGDFSVFSASPKEGHFQETFNKMKNTVENIDILCNEAENKLMHILHANDPKWSTPTKDCTSGPYTAQIIPGTGNKLLMSSPNCEIYYQSPLSLCMAKRKSVSTPVSAQMTSKSCKGEKEIDDQKNCKKRRALDFLSRLPLPPPVSPICTFVSPAAQKAFQPPRSCGTKYETPIKKKELNSPQMTPFKKFNEISLLESNSIADEELALINTQALLSGSTGEKQFISVSESTRTAPTSSEDYLRLKRRCTTSLIKEQESSQASTEECEKNKQDTITTKKYI.

Residues 1-40 (MPIGSKERPTFFEIFKTRCNKADLGPISLNWFEELSSEAP) form an interaction with PALB2 region. Residues 37 to 68 (SEAPPYNSEPAEESEHKNNNYEPNLFKTPQRK) are disordered. Ser70 bears the Phosphoserine mark. The disordered stretch occupies residues 358–381 (VEPNDTDPLDSNVANQKPFESGSD). A phosphoserine mark is found at Ser445, Ser492, and Ser755. Residues 639-1000 (LHSSVKRSCS…NKWAGLLGPI (362 aa)) form an interaction with NPM1 region. 6 BRCA2 repeats span residues 1002–1036 (NHSF…DIEE), 1212–1246 (NEVG…DIEN), 1421–1455 (FETS…QKPE), 1517–1551 (KEPT…EKEQ), 1664–1698 (IENS…EGIF), and 1837–1871 (FEVG…DSFS). The tract at residues 1003-2082 (HSFGGSFRTA…LHKVKGVLEE (1080 aa)) is interaction with RAD51. The interval 1338-1781 (GSDSSKNDTV…IEPVLKNVED (444 aa)) is interaction with POLH. The tract at residues 1410 to 1595 (TATKTEQNIK…TAAPKCKEMQ (186 aa)) is required for stimulation of POLH DNA polymerization activity. Ser1970 is modified (phosphoserine). One copy of the BRCA2 7 repeat lies at 1971–2005 (SANTCGIFSTASGKSVQVSDASLQNARQVFSEIED). Thr2035 bears the Phosphothreonine mark. A BRCA2 8 repeat occupies 2051-2085 (NSSAFSGFSTASGKQVSILESSLHKVKGVLEEFDL). Residue Ser2095 is modified to Phosphoserine. The segment at 2270–2337 (GKRRGEPLIL…EPITCVPFRT (68 aa)) is interaction with HSF2BP. Residues 2350 to 2545 (TAPGQEFLSK…SHKQLYTYGV (196 aa)) are interaction with FANCD2. A disordered region spans residues 2430–2450 (ENRQKQNIDGHGSDDSKNKIN). Positions 2481 to 2832 (ITSLQNARDI…QRAYPIQWME (352 aa)) are interaction with SEM1. The Nuclear export signal; masked by interaction with SEM1 signature appears at 2682-2698 (AAKTLVLCVSDIISLSA). A Phosphoserine; by CDK1 and CDK2 modification is found at Ser3291. Ser3319 is modified (phosphoserine). Thr3387 is modified (phosphothreonine; by CHEK1 and CHEK2). The disordered stretch occupies residues 3393–3418 (EQESSQASTEECEKNKQDTITTKKYI).

As to quaternary structure, monomer and dimer. Interacts with RAD51; regulates RAD51 recruitment and function at sites of DNA repair. Interacts with WDR16, USP11, DMC1, ROCK2 and NPM1. Interacts with SEM1; the interaction masks a nuclear export signal in BRCA2. Interacts with both nonubiquitinated and monoubiquitinated FANCD2; this complex also includes XRCC3 and phosphorylated FANCG. Part of a BRCA complex containing BRCA1, BRCA2 and PALB2. Component of the homologous recombination repair (HR) complex composed of ERCC5/XPG, BRCA2, PALB2, DSS1 and RAD51. Within the complex, interacts with ERCC5/XPG and PALB2. Interacts directly with PALB2 which may serve as a scaffold for a HR complex containing PALB2, BRCA2, RAD51C, RAD51 and XRCC3. Interacts with BRCA1 only in the presence of PALB2 which serves as the bridging protein. Interacts with POLH; the interaction is direct. Interacts with the TREX-2 complex subunits PCID2 and SEM1. Interacts with HSF2BP and BRME1; the interaction with HSF2BP is direct and allows the formation of a ternary complex. The complex BRME1:HSF2BP:BRCA2 interacts with SPATA22, MEIOB and RAD51. Phosphorylated by ATM upon irradiation-induced DNA damage. Phosphorylation by CHEK1 and CHEK2 regulates interaction with RAD51. Phosphorylation at Ser-3291 by CDK1 and CDK2 is low in S phase when recombination is active, but increases as cells progress towards mitosis; this phosphorylation prevents homologous recombination-dependent repair during S phase and G2 by inhibiting RAD51 binding. In terms of processing, ubiquitinated in the absence of DNA damage; this does not lead to proteasomal degradation. In contrast, ubiquitination in response to DNA damage leads to proteasomal degradation. Highest levels of expression in breast and thymus, with slightly lower levels in lung, ovary and spleen.

It is found in the nucleus. Its subcellular location is the cytoplasm. The protein localises to the cytoskeleton. It localises to the microtubule organizing center. The protein resides in the centrosome. In terms of biological role, involved in double-strand break repair and/or homologous recombination. Binds RAD51 and potentiates recombinational DNA repair by promoting assembly of RAD51 onto single-stranded DNA (ssDNA). Acts by targeting RAD51 to ssDNA over double-stranded DNA, enabling RAD51 to displace replication protein-A (RPA) from ssDNA and stabilizing RAD51-ssDNA filaments by blocking ATP hydrolysis. Part of a PALB2-scaffolded HR complex containing RAD51C and which is thought to play a role in DNA repair by HR. May participate in S phase checkpoint activation. Binds selectively to ssDNA, and to ssDNA in tailed duplexes and replication fork structures. May play a role in the extension step after strand invasion at replication-dependent DNA double-strand breaks; together with PALB2 is involved in both POLH localization at collapsed replication forks and DNA polymerization activity. In concert with NPM1, regulates centrosome duplication. Interacts with the TREX-2 complex (transcription and export complex 2) subunits PCID2 and SEM1, and is required to prevent R-loop-associated DNA damage and thus transcription-associated genomic instability. Silencing of BRCA2 promotes R-loop accumulation at actively transcribed genes in replicating and non-replicating cells, suggesting that BRCA2 mediates the control of R-loop associated genomic instability, independently of its known role in homologous recombination. The protein is Breast cancer type 2 susceptibility protein of Homo sapiens (Human).